A 73-amino-acid chain; its full sequence is Beta-defensin 39 (73 aa).

An N-terminal signal peptide occupies residues 1-23; sequence MKISCFLLLVLSLSCFQINSVSG. 3 disulfide bridges follow: Cys-29/Cys-58, Cys-36/Cys-51, and Cys-41/Cys-59.

This sequence belongs to the beta-defensin family.

Its subcellular location is the secreted. Has antibacterial activity. This chain is Beta-defensin 39 (Defb39), found in Rattus norvegicus (Rat).